The sequence spans 279 residues: NH(3)-dependent NAD(+) synthetase (279 aa).

Residue 40 to 47 (GLSGGIDS) participates in ATP binding. Asp-46 provides a ligand contact to Mg(2+). Arg-122 is a binding site for deamido-NAD(+). Thr-142 lines the ATP pocket. Glu-147 is a binding site for Mg(2+). Deamido-NAD(+) contacts are provided by Lys-155 and Asp-162. 2 residues coordinate ATP: Lys-171 and Ser-193. A deamido-NAD(+)-binding site is contributed by 253 to 254 (HK).

The protein belongs to the NAD synthetase family. As to quaternary structure, homodimer.

The catalysed reaction is deamido-NAD(+) + NH4(+) + ATP = AMP + diphosphate + NAD(+) + H(+). It participates in cofactor biosynthesis; NAD(+) biosynthesis; NAD(+) from deamido-NAD(+) (ammonia route): step 1/1. In terms of biological role, catalyzes the ATP-dependent amidation of deamido-NAD to form NAD. Uses ammonia as a nitrogen source. The protein is NH(3)-dependent NAD(+) synthetase of Sulfurisphaera tokodaii (strain DSM 16993 / JCM 10545 / NBRC 100140 / 7) (Sulfolobus tokodaii).